The primary structure comprises 335 residues: NADH-quinone oxidoreductase subunit H (335 aa).

The next 8 helical transmembrane spans lie at 12 to 32, 81 to 101, 114 to 134, 154 to 174, 187 to 207, 238 to 258, 270 to 290, and 307 to 327; these read IIAV…GALL, VIFT…FAVI, IGLL…LFAG, VSYE…VGSF, LWFI…GVAV, FFVG…TLFF, SLAF…FILL, and WKFC…IVLL.

This sequence belongs to the complex I subunit 1 family. As to quaternary structure, NDH-1 is composed of 13 different subunits. Subunits NuoA, H, J, K, L, M, N constitute the membrane sector of the complex.

It is found in the cell inner membrane. It carries out the reaction a quinone + NADH + 5 H(+)(in) = a quinol + NAD(+) + 4 H(+)(out). Functionally, NDH-1 shuttles electrons from NADH, via FMN and iron-sulfur (Fe-S) centers, to quinones in the respiratory chain. The immediate electron acceptor for the enzyme in this species is believed to be ubiquinone. Couples the redox reaction to proton translocation (for every two electrons transferred, four hydrogen ions are translocated across the cytoplasmic membrane), and thus conserves the redox energy in a proton gradient. This subunit may bind ubiquinone. The polypeptide is NADH-quinone oxidoreductase subunit H (Pseudomonas syringae pv. syringae (strain B728a)).